A 174-amino-acid chain; its full sequence is Peptide methionine sulfoxide reductase MsrA (174 aa).

Residue cysteine 11 is part of the active site.

It belongs to the MsrA Met sulfoxide reductase family.

It carries out the reaction L-methionyl-[protein] + [thioredoxin]-disulfide + H2O = L-methionyl-(S)-S-oxide-[protein] + [thioredoxin]-dithiol. The catalysed reaction is [thioredoxin]-disulfide + L-methionine + H2O = L-methionine (S)-S-oxide + [thioredoxin]-dithiol. Has an important function as a repair enzyme for proteins that have been inactivated by oxidation. Catalyzes the reversible oxidation-reduction of methionine sulfoxide in proteins to methionine. This is Peptide methionine sulfoxide reductase MsrA from Pasteurella multocida (strain Pm70).